We begin with the raw amino-acid sequence, 97 residues long: Small ribosomal subunit protein bS6 (97 aa).

It belongs to the bacterial ribosomal protein bS6 family.

Functionally, binds together with bS18 to 16S ribosomal RNA. This Syntrophomonas wolfei subsp. wolfei (strain DSM 2245B / Goettingen) protein is Small ribosomal subunit protein bS6.